Consider the following 411-residue polypeptide: Copper resistance protein CRF1 (411 aa).

A DNA-binding region (copper-fist) is located at residues 1-40 (MVVIEGIKYACERCIRGHRVSSCTHTQQPLIRIKPKGRPA). Zn(2+) contacts are provided by C11, C14, C23, and H25. Low complexity-rich tracts occupy residues 115-190 (QQQA…PHSP), 205-214 (SSSSLSSLHS), 227-241 (SHNSLSAASQLANSP), and 350-370 (SVAANPSASASASSIQTPPSS). Disordered regions lie at residues 115–241 (QQQA…ANSP) and 348–389 (EMSV…VSPA).

It is found in the nucleus. Functionally, transcriptional regulator involved in resistance to high copper concentration. The sequence is that of Copper resistance protein CRF1 (CRF1) from Yarrowia lipolytica (strain CLIB 122 / E 150) (Yeast).